The sequence spans 117 residues: Large ribosomal subunit protein bL17 (117 aa).

This sequence belongs to the bacterial ribosomal protein bL17 family. In terms of assembly, part of the 50S ribosomal subunit. Contacts protein L32.

The chain is Large ribosomal subunit protein bL17 from Exiguobacterium sp. (strain ATCC BAA-1283 / AT1b).